We begin with the raw amino-acid sequence, 257 residues long: Trans-aconitate 2-methyltransferase (257 aa).

The protein belongs to the methyltransferase superfamily. Tam family.

The protein resides in the cytoplasm. It catalyses the reaction trans-aconitate + S-adenosyl-L-methionine = (E)-3-(methoxycarbonyl)pent-2-enedioate + S-adenosyl-L-homocysteine. Catalyzes the S-adenosylmethionine monomethyl esterification of trans-aconitate. The chain is Trans-aconitate 2-methyltransferase from Sinorhizobium fredii (strain NBRC 101917 / NGR234).